The sequence spans 292 residues: MKLIDTLLKLGNDVHINEKMKCHVSFKIGGPVRLFIIPYTVDMFLETLNVLDNVKILGNGTNVLPKDEYMDFNVISTEKLTGIFVENDTIICESGLSLKKLCLYAAKEGFSGFENAYGIPGSVGGAAYMNAGAFGWETAEMIEFVDVYDGKKVLRLDRTEMKFSYRNSIFKENEDLIILRVGFRIIKGDSYNIFSRMKQVMIKRVEKQPLEFPSAGSVFKRPRKGFYVGSAIEKIGLKGFRIGGAMISEKHAGFIINYNNAKSSDVKDMIELVKDKIYKNFGVKLETEIEIW.

Residues 27-188 form the FAD-binding PCMH-type domain; sequence KIGGPVRLFI…LRVGFRIIKG (162 aa). Residue Arg166 is part of the active site. Ser217 acts as the Proton donor in catalysis. Residue Glu288 is part of the active site.

This sequence belongs to the MurB family. FAD serves as cofactor.

It localises to the cytoplasm. It carries out the reaction UDP-N-acetyl-alpha-D-muramate + NADP(+) = UDP-N-acetyl-3-O-(1-carboxyvinyl)-alpha-D-glucosamine + NADPH + H(+). The protein operates within cell wall biogenesis; peptidoglycan biosynthesis. Cell wall formation. This Thermosipho melanesiensis (strain DSM 12029 / CIP 104789 / BI429) protein is UDP-N-acetylenolpyruvoylglucosamine reductase.